A 679-amino-acid chain; its full sequence is Methionine--tRNA ligase (679 aa).

The short motif at Pro-12 to His-22 is the 'HIGH' region element. Zn(2+) is bound by residues Cys-143, Cys-146, Cys-156, and Cys-159. The 'KMSKS' region motif lies at Lys-328–Ser-332. Position 331 (Lys-331) interacts with ATP. The region spanning Asp-577–Lys-679 is the tRNA-binding domain.

Belongs to the class-I aminoacyl-tRNA synthetase family. MetG type 1 subfamily. In terms of assembly, homodimer. Zn(2+) serves as cofactor.

Its subcellular location is the cytoplasm. It carries out the reaction tRNA(Met) + L-methionine + ATP = L-methionyl-tRNA(Met) + AMP + diphosphate. Its function is as follows. Is required not only for elongation of protein synthesis but also for the initiation of all mRNA translation through initiator tRNA(fMet) aminoacylation. This Actinobacillus pleuropneumoniae serotype 5b (strain L20) protein is Methionine--tRNA ligase.